The following is a 233-amino-acid chain: Large ribosomal subunit protein bL19c (233 aa).

A chloroplast-targeting transit peptide spans 1 to 77 (MASKVLPQAL…FPARNSFVVR (77 aa)).

In terms of assembly, component of the chloroplast large ribosomal subunit (LSU). Mature 70S chloroplast ribosomes of higher plants consist of a small (30S) and a large (50S) subunit. The 30S small subunit contains 1 molecule of ribosomal RNA (16S rRNA) and 24 different proteins. The 50S large subunit contains 3 rRNA molecules (23S, 5S and 4.5S rRNA) and 33 different proteins.

It localises to the plastid. Its subcellular location is the chloroplast. Functionally, component of the chloroplast ribosome (chloro-ribosome), a dedicated translation machinery responsible for the synthesis of chloroplast genome-encoded proteins, including proteins of the transcription and translation machinery and components of the photosynthetic apparatus. The protein is Large ribosomal subunit protein bL19c (RPL19) of Spinacia oleracea (Spinach).